Reading from the N-terminus, the 256-residue chain is Hemin import ATP-binding protein HmuV (256 aa).

One can recognise an ABC transporter domain in the interval 2–238 (ISAQNLVYSL…QALTMLYGAD (237 aa)). 34–41 (GPNGAGKS) provides a ligand contact to ATP.

Belongs to the ABC transporter superfamily. Heme (hemin) importer (TC 3.A.1.14.5) family. As to quaternary structure, the complex is composed of two ATP-binding proteins (HmuV), two transmembrane proteins (HmuU) and a solute-binding protein (HmuT).

It localises to the cell inner membrane. Part of the ABC transporter complex HmuTUV involved in hemin import. Responsible for energy coupling to the transport system. The chain is Hemin import ATP-binding protein HmuV from Escherichia coli O157:H7.